The primary structure comprises 557 residues: Potassium-transporting ATPase potassium-binding subunit (557 aa).

Helical transmembrane passes span 5–25, 63–83, 132–152, 170–190, 253–273, 283–303, 329–349, 356–376, 379–399, 416–436, 484–504, and 526–546; these read GFLL…PLGS, LSAI…MLLG, GLTV…FAFI, LLRI…LFFI, FVQM…FGEV, LLWA…WAEV, VLVS…AVIA, ALGG…FGGV, GLYG…LMIG, LTAL…ALAM, LLAF…MAIA, and LFVG…FIPA.

This sequence belongs to the KdpA family. The system is composed of three essential subunits: KdpA, KdpB and KdpC.

Its subcellular location is the cell inner membrane. Its function is as follows. Part of the high-affinity ATP-driven potassium transport (or Kdp) system, which catalyzes the hydrolysis of ATP coupled with the electrogenic transport of potassium into the cytoplasm. This subunit binds the periplasmic potassium ions and delivers the ions to the membrane domain of KdpB through an intramembrane tunnel. The chain is Potassium-transporting ATPase potassium-binding subunit from Escherichia coli (strain SMS-3-5 / SECEC).